Consider the following 94-residue polypeptide: Transcription factor PRE6 (94 aa).

The tract at residues 1–20 (MSSRRSSRSRQSGSSRISDD) is disordered. The bHLH domain maps to 6–60 (SSRSRQSGSSRISDDQISDLVSKLQHLIPELRRRRSDKVSASKVLQETCNYIRNL).

It belongs to the bHLH protein family. As to quaternary structure, interacts with HFR1.

It is found in the cytoplasm. Its subcellular location is the nucleus. Functionally, atypical and probable non DNA-binding bHLH transcription factor that regulates light-mediated responses in day light conditions by binding and inhibiting the activity of the bHLH transcription factor HFR1, a critical regulator of light signaling and shade avoidance. Forms non-functional heterodimers with HFR1, causing liberation and activation of PIF4 from the transcriptionally inactive HFR1-PIF4 complex. This chain is Transcription factor PRE6 (PRE6), found in Arabidopsis thaliana (Mouse-ear cress).